We begin with the raw amino-acid sequence, 178 residues long: Large ribosomal subunit protein uL6 (178 aa).

The protein belongs to the universal ribosomal protein uL6 family. Part of the 50S ribosomal subunit.

Its function is as follows. This protein binds to the 23S rRNA, and is important in its secondary structure. It is located near the subunit interface in the base of the L7/L12 stalk, and near the tRNA binding site of the peptidyltransferase center. This Streptococcus suis (strain 05ZYH33) protein is Large ribosomal subunit protein uL6.